The sequence spans 427 residues: 3-phosphoshikimate 1-carboxyvinyltransferase (427 aa).

3 residues coordinate 3-phosphoshikimate: Lys-22, Ser-23, and Arg-27. Lys-22 provides a ligand contact to phosphoenolpyruvate. Residues Gly-96 and Arg-124 each contribute to the phosphoenolpyruvate site. The 3-phosphoshikimate site is built by Ser-169, Ser-170, Gln-171, Ser-197, Asp-313, Asn-336, and Lys-340. Gln-171 serves as a coordination point for phosphoenolpyruvate. Catalysis depends on Asp-313, which acts as the Proton acceptor. 3 residues coordinate phosphoenolpyruvate: Arg-344, Arg-386, and Lys-411.

The protein belongs to the EPSP synthase family. Monomer.

It is found in the cytoplasm. The enzyme catalyses 3-phosphoshikimate + phosphoenolpyruvate = 5-O-(1-carboxyvinyl)-3-phosphoshikimate + phosphate. Its pathway is metabolic intermediate biosynthesis; chorismate biosynthesis; chorismate from D-erythrose 4-phosphate and phosphoenolpyruvate: step 6/7. Catalyzes the transfer of the enolpyruvyl moiety of phosphoenolpyruvate (PEP) to the 5-hydroxyl of shikimate-3-phosphate (S3P) to produce enolpyruvyl shikimate-3-phosphate and inorganic phosphate. This is 3-phosphoshikimate 1-carboxyvinyltransferase from Salmonella newport (strain SL254).